A 195-amino-acid polypeptide reads, in one-letter code: UPF0215 protein TSIB_1161 (195 aa).

It belongs to the UPF0215 family.

This Thermococcus sibiricus (strain DSM 12597 / MM 739) protein is UPF0215 protein TSIB_1161.